The sequence spans 308 residues: Protoheme IX farnesyltransferase (308 aa).

9 consecutive transmembrane segments (helical) span residues 31-51 (VGIV…AFYF), 60-80 (LDIV…SCVI), 110-130 (ALWF…MTNL), 131-151 (TAAG…TMWS), 157-177 (VNTI…WTAV), 185-205 (AWVL…ALAI), 232-252 (IIIW…LGLP), 253-273 (IVIL…VGYR), and 285-305 (FVYS…FTLF).

The protein belongs to the UbiA prenyltransferase family. Protoheme IX farnesyltransferase subfamily. In terms of assembly, interacts with CtaA.

Its subcellular location is the cell membrane. The enzyme catalyses heme b + (2E,6E)-farnesyl diphosphate + H2O = Fe(II)-heme o + diphosphate. It participates in porphyrin-containing compound metabolism; heme O biosynthesis; heme O from protoheme: step 1/1. Its function is as follows. Converts heme B (protoheme IX) to heme O by substitution of the vinyl group on carbon 2 of heme B porphyrin ring with a hydroxyethyl farnesyl side group. This is Protoheme IX farnesyltransferase from Bacillus licheniformis (strain ATCC 14580 / DSM 13 / JCM 2505 / CCUG 7422 / NBRC 12200 / NCIMB 9375 / NCTC 10341 / NRRL NRS-1264 / Gibson 46).